The following is a 348-amino-acid chain: Spore development regulator vosA (348 aa).

The Velvet domain maps to 46–244 (ALSPSSCFLS…SDQGVRLRLR (199 aa)). The tract at residues 250-294 (MMSNKRSISGSGDLTSDQSQQQQQQQPLAKKRREDSVESANPSSL) is disordered. A compositionally biased stretch (polar residues) spans 253–266 (NKRSISGSGDLTSD). The Nuclear localization signal signature appears at 274-280 (QQPLAKK).

This sequence belongs to the velvet family. VosA subfamily. As to quaternary structure, forms a heterodimeric complex with VEL2; the formation of the VEL2-VOS1 complex is light-dependent.

It localises to the nucleus. In terms of biological role, component of the velB-VosA heterodimeric complex that plays a dual role in activating genes associated with spore maturation and repressing certain development-associated genes. The complex binds DNA through the DNA-binding domain of vosA that recognizes an 11-nucleotide consensus sequence 5'-CTGGCCGCGGC-3' consisting of two motifs in the promoters of key developmental regulatory genes. Regulates spore viability, trehalose accumulation, and tolerance to thermal and oxidative as well as ion stresses. Positively regulates conidial pigmentation and pathogenicity on barley. The polypeptide is Spore development regulator vosA (Cochliobolus sativus (strain ND90Pr / ATCC 201652) (Common root rot and spot blotch fungus)).